The chain runs to 807 residues: Protein FAR1-RELATED SEQUENCE 2 (807 aa).

The FAR1 domain occupies 52-138 (YFYREYARSV…VKEHNHEICP (87 aa)). In terms of domain architecture, MULE spans 219 to 315 (VVLFDTFYVR…CLWSVLSKIS (97 aa)). An SWIM-type zinc finger spans residues 499–535 (FFVALNNELLDACCSCHLFEYQGFLCKHAILVLQSAD). Positions 660 to 680 (EDATNRSEELRQETEQVSSRA) form a coiled coil. Polar residues predominate over residues 788-798 (GSSQFQGSDSS). The segment at 788–807 (GSSQFQGSDSSHPSDHRLSN) is disordered.

Belongs to the FHY3/FAR1 family. As to expression, expressed in hypocotyls, rosette and cauline leaves, inflorescences stems, flowers and siliques.

The protein resides in the nucleus. Functionally, putative transcription activator involved in regulating light control of development. This chain is Protein FAR1-RELATED SEQUENCE 2 (FRS2), found in Arabidopsis thaliana (Mouse-ear cress).